Here is a 37-residue protein sequence, read N- to C-terminus: Omega-sparatoxin-Hv1a (37 aa).

3 disulfides stabilise this stretch: C4/C18, C11/C23, and C17/C33.

In terms of tissue distribution, expressed by the venom gland.

It is found in the secreted. Blocks calcium channels (Cav). The polypeptide is Omega-sparatoxin-Hv1a (Heteropoda venatoria (Brown huntsman spider)).